We begin with the raw amino-acid sequence, 330 residues long: Ribosomal RNA small subunit methyltransferase A (330 aa).

His29, Leu31, Gly56, Glu77, and Asp98 together coordinate S-adenosyl-L-methionine. Positions 115-158 are disordered; it reads PVRSAGLPQAETAPKGLEPAGSSSQQGPRDWLRQTAGAAAPSRG. Asn177 is an S-adenosyl-L-methionine binding site.

It belongs to the class I-like SAM-binding methyltransferase superfamily. rRNA adenine N(6)-methyltransferase family. RsmA subfamily.

The protein resides in the cytoplasm. It carries out the reaction adenosine(1518)/adenosine(1519) in 16S rRNA + 4 S-adenosyl-L-methionine = N(6)-dimethyladenosine(1518)/N(6)-dimethyladenosine(1519) in 16S rRNA + 4 S-adenosyl-L-homocysteine + 4 H(+). Functionally, specifically dimethylates two adjacent adenosines (A1518 and A1519) in the loop of a conserved hairpin near the 3'-end of 16S rRNA in the 30S particle. May play a critical role in biogenesis of 30S subunits. This chain is Ribosomal RNA small subunit methyltransferase A, found in Polaromonas sp. (strain JS666 / ATCC BAA-500).